The sequence spans 138 residues: Cofilin (138 aa).

The 135-residue stretch at 2-136 (SSGVQPTQEC…TKDALFEKAT (135 aa)) folds into the ADF-H domain.

It belongs to the actin-binding proteins ADF family.

It localises to the cytoplasm. It is found in the cytoskeleton. The protein localises to the nucleus matrix. Functionally, controls reversibly actin polymerization and depolymerization in a pH-sensitive manner. It has the ability to bind G- and F-actin in a 1:1 ratio of cofilin to actin. Binding to F-actin is regulated by tropomyosin. It is the major component of intranuclear and cytoplasmic actin rods. Required for accumulation of actin at the cell division site via depolymerizing actin at the cell ends. In association with myosin II has a role in the assembly of the contractile ring via severing actin filaments. Involved in the maintenance of the contractile ring once formed. In association with profilin and capping protein, has a role in the mitotic reorganization of the actin cytoskeleton. The protein is Cofilin (COF1) of Cryptococcus neoformans var. neoformans serotype D (strain B-3501A) (Filobasidiella neoformans).